The chain runs to 282 residues: Acetylglutamate kinase (282 aa).

Substrate is bound by residues G62–G63, R84, and N178.

This sequence belongs to the acetylglutamate kinase family. ArgB subfamily.

It localises to the cytoplasm. The catalysed reaction is N-acetyl-L-glutamate + ATP = N-acetyl-L-glutamyl 5-phosphate + ADP. The protein operates within amino-acid biosynthesis; L-arginine biosynthesis; N(2)-acetyl-L-ornithine from L-glutamate: step 2/4. In terms of biological role, catalyzes the ATP-dependent phosphorylation of N-acetyl-L-glutamate. This is Acetylglutamate kinase from Thermotoga sp. (strain RQ2).